The primary structure comprises 508 residues: 3-octaprenyl-4-hydroxybenzoate carboxy-lyase (508 aa).

Residue Asn178 coordinates Mn(2+). Residues 181–183 (IYR), 195–197 (RWL), and 200–201 (RG) contribute to the prenylated FMN site. Glu244 is a binding site for Mn(2+). Catalysis depends on Asp303, which acts as the Proton donor.

This sequence belongs to the UbiD family. In terms of assembly, homohexamer. Prenylated FMN serves as cofactor. Requires Mn(2+) as cofactor.

It localises to the cell membrane. The catalysed reaction is a 4-hydroxy-3-(all-trans-polyprenyl)benzoate + H(+) = a 2-(all-trans-polyprenyl)phenol + CO2. It participates in cofactor biosynthesis; ubiquinone biosynthesis. In terms of biological role, catalyzes the decarboxylation of 3-octaprenyl-4-hydroxy benzoate to 2-octaprenylphenol, an intermediate step in ubiquinone biosynthesis. In Cupriavidus taiwanensis (strain DSM 17343 / BCRC 17206 / CCUG 44338 / CIP 107171 / LMG 19424 / R1) (Ralstonia taiwanensis (strain LMG 19424)), this protein is 3-octaprenyl-4-hydroxybenzoate carboxy-lyase.